We begin with the raw amino-acid sequence, 309 residues long: tRNA dimethylallyltransferase (309 aa).

11–18 serves as a coordination point for ATP; that stretch reads GPTASGKS. 13-18 is a substrate binding site; it reads TASGKS. Interaction with substrate tRNA regions lie at residues 36 to 39 and 160 to 164; these read DSMQ and QRLIR.

The protein belongs to the IPP transferase family. Monomer. It depends on Mg(2+) as a cofactor.

It catalyses the reaction adenosine(37) in tRNA + dimethylallyl diphosphate = N(6)-dimethylallyladenosine(37) in tRNA + diphosphate. Functionally, catalyzes the transfer of a dimethylallyl group onto the adenine at position 37 in tRNAs that read codons beginning with uridine, leading to the formation of N6-(dimethylallyl)adenosine (i(6)A). The chain is tRNA dimethylallyltransferase from Rickettsia felis (strain ATCC VR-1525 / URRWXCal2) (Rickettsia azadi).